The primary structure comprises 1184 residues: Protocadherin-12 (1184 aa).

An N-terminal signal peptide occupies residues 1-24 (MMQLLQLLLGLLGPGGYLFLLGDC). The Extracellular portion of the chain corresponds to 25-718 (QEVTTLTVKY…PGALSMSMLT (694 aa)). Cadherin domains lie at 28–135 (TTLT…QPRF), 136–244 (PKGE…SPAF), 245–352 (AESS…IPSI), 355–460 (TWAS…APVF), and 461–565 (EKSR…APEV). N-linked (GlcNAc...) asparagine glycosylation is present at Asn-415. N-linked (GlcNAc...) asparagine glycans are attached at residues Asn-582, Asn-659, and Asn-662. The region spanning 600–711 (PAGTDTPPLA…LRDSARKPGA (112 aa)) is the Cadherin 6 domain. A helical membrane pass occupies residues 719 to 739 (VICLAVLLGIFGLILALFMSI). Over 740–1184 (CRTEKKDNRA…RGSSSSSRCL (445 aa)) the chain is Cytoplasmic. 2 disordered regions span residues 854 to 928 (RQRN…ESGP) and 973 to 1023 (QFQP…DPEE). Residue Ser-859 is modified to Phosphoserine. Residues 1012–1023 (PEQEEGPLDPEE) are compositionally biased toward acidic residues. Position 1062 is a phosphoserine (Ser-1062). Positions 1153 to 1184 (SAASGMKVQGDPGGKTGTEGKSRGSSSSSRCL) are disordered. The segment covering 1175–1184 (RGSSSSSRCL) has biased composition (low complexity).

Cleaved by ADAM10 close to the transmembrane domain to release the Protocadherin-12, secreted form in the serum. Cleavage results in reduced cellular adhesion in a cell migration assay. Expressed in highly vascularized tissues including the heart and placenta, but most tissues contain a low level of expression. Prominent expression in the spleen. Present in villous and extravillous trophoblast (at protein level).

It localises to the cell membrane. It is found in the cell junction. Its subcellular location is the secreted. Cellular adhesion molecule that may play an important role in cell-cell interactions at interendothelial junctions. Acts as a regulator of cell migration, probably via increasing cell-cell adhesion. Promotes homotypic calcium-dependent aggregation and adhesion and clusters at intercellular junctions. Unable to bind to catenins, weakly associates with the cytoskeleton. The polypeptide is Protocadherin-12 (Homo sapiens (Human)).